Consider the following 391-residue polypeptide: Processive diacylglycerol beta-glucosyltransferase (391 aa).

The protein belongs to the glycosyltransferase 28 family. UgtP subfamily.

It localises to the cell membrane. The catalysed reaction is a 1,2-diacyl-3-O-(beta-D-glucopyranosyl)-sn-glycerol + UDP-alpha-D-glucose = a 1,2-diacyl-3-O-(beta-D-Glc-(1-&gt;6)-beta-D-Glc)-sn-glycerol + UDP + H(+). It carries out the reaction a 1,2-diacyl-sn-glycerol + UDP-alpha-D-glucose = a 1,2-diacyl-3-O-(beta-D-glucopyranosyl)-sn-glycerol + UDP + H(+). The protein operates within glycolipid metabolism; diglucosyl-diacylglycerol biosynthesis. In terms of biological role, processive glucosyltransferase involved in the biosynthesis of both the bilayer- and non-bilayer-forming membrane glucolipids. Is able to successively transfer two glucosyl residues to diacylglycerol (DAG), thereby catalyzing the formation of beta-monoglucosyl-DAG (3-O-(beta-D-glucopyranosyl)-1,2-diacyl-sn-glycerol) and beta-diglucosyl-DAG (3-O-(beta-D-glucopyranosyl-beta-(1-&gt;6)-D-glucopyranosyl)-1,2-diacyl-sn-glycerol). Beta-diglucosyl-DAG is the predominant glycolipid found in Bacillales and is also used as a membrane anchor for lipoteichoic acid (LTA). The sequence is that of Processive diacylglycerol beta-glucosyltransferase from Staphylococcus aureus (strain Mu3 / ATCC 700698).